A 475-amino-acid chain; its full sequence is Aspartyl/glutamyl-tRNA(Asn/Gln) amidotransferase subunit B (475 aa).

It belongs to the GatB/GatE family. GatB subfamily. Heterotrimer of A, B and C subunits.

The enzyme catalyses L-glutamyl-tRNA(Gln) + L-glutamine + ATP + H2O = L-glutaminyl-tRNA(Gln) + L-glutamate + ADP + phosphate + H(+). It carries out the reaction L-aspartyl-tRNA(Asn) + L-glutamine + ATP + H2O = L-asparaginyl-tRNA(Asn) + L-glutamate + ADP + phosphate + 2 H(+). In terms of biological role, allows the formation of correctly charged Asn-tRNA(Asn) or Gln-tRNA(Gln) through the transamidation of misacylated Asp-tRNA(Asn) or Glu-tRNA(Gln) in organisms which lack either or both of asparaginyl-tRNA or glutaminyl-tRNA synthetases. The reaction takes place in the presence of glutamine and ATP through an activated phospho-Asp-tRNA(Asn) or phospho-Glu-tRNA(Gln). The sequence is that of Aspartyl/glutamyl-tRNA(Asn/Gln) amidotransferase subunit B from Staphylococcus carnosus (strain TM300).